The following is a 192-amino-acid chain: Elongation factor P (192 aa).

Residues 133-157 (EVTETTPGVKGDTAQGGDKPATLES) form a disordered region.

This sequence belongs to the elongation factor P family.

Its subcellular location is the cytoplasm. The protein operates within protein biosynthesis; polypeptide chain elongation. Its function is as follows. Involved in peptide bond synthesis. Stimulates efficient translation and peptide-bond synthesis on native or reconstituted 70S ribosomes in vitro. Probably functions indirectly by altering the affinity of the ribosome for aminoacyl-tRNA, thus increasing their reactivity as acceptors for peptidyl transferase. The chain is Elongation factor P from Salinibacter ruber (strain DSM 13855 / M31).